Reading from the N-terminus, the 245-residue chain is 1-(5-phosphoribosyl)-5-[(5-phosphoribosylamino)methylideneamino] imidazole-4-carboxamide isomerase (245 aa).

Asp-7 acts as the Proton acceptor in catalysis. Residue Asp-129 is the Proton donor of the active site.

This sequence belongs to the HisA/HisF family.

The protein localises to the cytoplasm. The catalysed reaction is 1-(5-phospho-beta-D-ribosyl)-5-[(5-phospho-beta-D-ribosylamino)methylideneamino]imidazole-4-carboxamide = 5-[(5-phospho-1-deoxy-D-ribulos-1-ylimino)methylamino]-1-(5-phospho-beta-D-ribosyl)imidazole-4-carboxamide. The protein operates within amino-acid biosynthesis; L-histidine biosynthesis; L-histidine from 5-phospho-alpha-D-ribose 1-diphosphate: step 4/9. The protein is 1-(5-phosphoribosyl)-5-[(5-phosphoribosylamino)methylideneamino] imidazole-4-carboxamide isomerase of Psychromonas ingrahamii (strain DSM 17664 / CCUG 51855 / 37).